Here is a 271-residue protein sequence, read N- to C-terminus: Thiazole synthase (271 aa).

Lys-104 acts as the Schiff-base intermediate with DXP in catalysis. Residues Gly-165, Ala-192–Gly-193, and Asn-214–Thr-215 contribute to the 1-deoxy-D-xylulose 5-phosphate site.

The protein belongs to the ThiG family. Homotetramer. Forms heterodimers with either ThiH or ThiS.

It localises to the cytoplasm. It carries out the reaction [ThiS sulfur-carrier protein]-C-terminal-Gly-aminoethanethioate + 2-iminoacetate + 1-deoxy-D-xylulose 5-phosphate = [ThiS sulfur-carrier protein]-C-terminal Gly-Gly + 2-[(2R,5Z)-2-carboxy-4-methylthiazol-5(2H)-ylidene]ethyl phosphate + 2 H2O + H(+). Its pathway is cofactor biosynthesis; thiamine diphosphate biosynthesis. In terms of biological role, catalyzes the rearrangement of 1-deoxy-D-xylulose 5-phosphate (DXP) to produce the thiazole phosphate moiety of thiamine. Sulfur is provided by the thiocarboxylate moiety of the carrier protein ThiS. In vitro, sulfur can be provided by H(2)S. The chain is Thiazole synthase from Burkholderia thailandensis (strain ATCC 700388 / DSM 13276 / CCUG 48851 / CIP 106301 / E264).